Reading from the N-terminus, the 330-residue chain is Ketol-acid reductoisomerase (NADP(+)) (330 aa).

One can recognise a KARI N-terminal Rossmann domain in the interval 1–182 (MKKVYYDQDA…GCTRAGVFET (182 aa)). NADP(+) contacts are provided by residues 25–28 (YGSQ), Ser-51, Ser-53, and 83–86 (DQIQ). The active site involves His-108. Gly-134 provides a ligand contact to NADP(+). In terms of domain architecture, KARI C-terminal knotted spans 183-328 (TFKEETETDL…AELRQMMPWL (146 aa)). Residues Asp-191, Glu-195, Glu-227, and Glu-231 each contribute to the Mg(2+) site. Substrate is bound at residue Ser-252.

The protein belongs to the ketol-acid reductoisomerase family. Mg(2+) serves as cofactor.

The catalysed reaction is (2R)-2,3-dihydroxy-3-methylbutanoate + NADP(+) = (2S)-2-acetolactate + NADPH + H(+). It catalyses the reaction (2R,3R)-2,3-dihydroxy-3-methylpentanoate + NADP(+) = (S)-2-ethyl-2-hydroxy-3-oxobutanoate + NADPH + H(+). Its pathway is amino-acid biosynthesis; L-isoleucine biosynthesis; L-isoleucine from 2-oxobutanoate: step 2/4. The protein operates within amino-acid biosynthesis; L-valine biosynthesis; L-valine from pyruvate: step 2/4. Involved in the biosynthesis of branched-chain amino acids (BCAA). Catalyzes an alkyl-migration followed by a ketol-acid reduction of (S)-2-acetolactate (S2AL) to yield (R)-2,3-dihydroxy-isovalerate. In the isomerase reaction, S2AL is rearranged via a Mg-dependent methyl migration to produce 3-hydroxy-3-methyl-2-ketobutyrate (HMKB). In the reductase reaction, this 2-ketoacid undergoes a metal-dependent reduction by NADPH to yield (R)-2,3-dihydroxy-isovalerate. This Carboxydothermus hydrogenoformans (strain ATCC BAA-161 / DSM 6008 / Z-2901) protein is Ketol-acid reductoisomerase (NADP(+)).